The following is a 193-amino-acid chain: Segregation and condensation protein B (193 aa).

Belongs to the ScpB family. In terms of assembly, homodimer. Homodimerization may be required to stabilize the binding of ScpA to the Smc head domains. Component of a cohesin-like complex composed of ScpA, ScpB and the Smc homodimer, in which ScpA and ScpB bind to the head domain of Smc. The presence of the three proteins is required for the association of the complex with DNA.

It localises to the cytoplasm. In terms of biological role, participates in chromosomal partition during cell division. May act via the formation of a condensin-like complex containing Smc and ScpA that pull DNA away from mid-cell into both cell halves. This is Segregation and condensation protein B from Streptococcus thermophilus (strain ATCC BAA-250 / LMG 18311).